We begin with the raw amino-acid sequence, 152 residues long: Snaclec 5 (152 aa).

An N-terminal signal peptide occupies residues 1–23 (MGRFIFLSSGLLVVFLSLSGTGA). Cystine bridges form between Cys27/Cys38, Cys55/Cys148, and Cys123/Cys140. In terms of domain architecture, C-type lectin spans 34 to 149 (YGQHCYRAFK…CASHNPFVCK (116 aa)).

This sequence belongs to the snaclec family. In terms of assembly, heterodimer; disulfide-linked. Expressed by the venom gland.

It is found in the secreted. Interferes with one step of hemostasis (modulation of platelet aggregation, or coagulation cascade, for example). The polypeptide is Snaclec 5 (Bitis arietans (African puff adder)).